The chain runs to 385 residues: Mannitol-1-phosphate 5-dehydrogenase (385 aa).

3 to 14 (ALQFGAGNIGRG) provides a ligand contact to NAD(+).

Belongs to the mannitol dehydrogenase family.

It catalyses the reaction D-mannitol 1-phosphate + NAD(+) = beta-D-fructose 6-phosphate + NADH + H(+). This chain is Mannitol-1-phosphate 5-dehydrogenase (mtlD), found in Buchnera aphidicola subsp. Acyrthosiphon pisum (strain APS) (Acyrthosiphon pisum symbiotic bacterium).